Consider the following 233-residue polypeptide: Ribose-5-phosphate isomerase A (233 aa).

Substrate contacts are provided by residues 31 to 34, 87 to 90, and 100 to 103; these read SGST, DGAD, and KGGG. E109 serves as the catalytic Proton acceptor. K127 contributes to the substrate binding site.

The protein belongs to the ribose 5-phosphate isomerase family. As to quaternary structure, homodimer.

The catalysed reaction is aldehydo-D-ribose 5-phosphate = D-ribulose 5-phosphate. The protein operates within carbohydrate degradation; pentose phosphate pathway; D-ribose 5-phosphate from D-ribulose 5-phosphate (non-oxidative stage): step 1/1. In terms of biological role, catalyzes the reversible conversion of ribose-5-phosphate to ribulose 5-phosphate. This chain is Ribose-5-phosphate isomerase A, found in Chlamydia caviae (strain ATCC VR-813 / DSM 19441 / 03DC25 / GPIC) (Chlamydophila caviae).